We begin with the raw amino-acid sequence, 958 residues long: Glycine dehydrogenase (decarboxylating) (958 aa).

The residue at position 705 (K705) is an N6-(pyridoxal phosphate)lysine.

The protein belongs to the GcvP family. The glycine cleavage system is composed of four proteins: P, T, L and H. The cofactor is pyridoxal 5'-phosphate.

The catalysed reaction is N(6)-[(R)-lipoyl]-L-lysyl-[glycine-cleavage complex H protein] + glycine + H(+) = N(6)-[(R)-S(8)-aminomethyldihydrolipoyl]-L-lysyl-[glycine-cleavage complex H protein] + CO2. Its function is as follows. The glycine cleavage system catalyzes the degradation of glycine. The P protein binds the alpha-amino group of glycine through its pyridoxal phosphate cofactor; CO(2) is released and the remaining methylamine moiety is then transferred to the lipoamide cofactor of the H protein. This Bdellovibrio bacteriovorus (strain ATCC 15356 / DSM 50701 / NCIMB 9529 / HD100) protein is Glycine dehydrogenase (decarboxylating).